Reading from the N-terminus, the 242-residue chain is Ubiquinone biosynthesis O-methyltransferase (242 aa).

Residues R44, G64, D85, and M129 each contribute to the S-adenosyl-L-methionine site.

This sequence belongs to the methyltransferase superfamily. UbiG/COQ3 family.

The catalysed reaction is a 3-demethylubiquinol + S-adenosyl-L-methionine = a ubiquinol + S-adenosyl-L-homocysteine + H(+). It carries out the reaction a 3-(all-trans-polyprenyl)benzene-1,2-diol + S-adenosyl-L-methionine = a 2-methoxy-6-(all-trans-polyprenyl)phenol + S-adenosyl-L-homocysteine + H(+). The protein operates within cofactor biosynthesis; ubiquinone biosynthesis. In terms of biological role, O-methyltransferase that catalyzes the 2 O-methylation steps in the ubiquinone biosynthetic pathway. This chain is Ubiquinone biosynthesis O-methyltransferase, found in Salmonella arizonae (strain ATCC BAA-731 / CDC346-86 / RSK2980).